The sequence spans 326 residues: Myeloid protein 1 (326 aa).

A signal peptide spans 1-18; that stretch reads MPALSLIALLSLVSTAFA. A run of 2 repeats spans residues 28–162 and 177–312. 3 disulfide bridges follow: Cys-37–Cys-74, Cys-48–Cys-53, and Cys-113–Cys-156. The Zn(2+) site is built by His-67, Asp-71, and His-152. Residues 307–326 form a disordered region; the sequence is DRSDPTSNLERGKGESEMEV.

It belongs to the LECT2/MIM-1 family. Post-translationally, substrate for arginine-specific ADP-ribosyltransferase.

The protein resides in the cytoplasmic granule. In Gallus gallus (Chicken), this protein is Myeloid protein 1 (MIM1).